Consider the following 171-residue polypeptide: SPbeta prophage-derived uncharacterized protein YokC (171 aa).

The sequence is that of SPbeta prophage-derived uncharacterized protein YokC (yokC) from Bacillus subtilis (strain 168).